We begin with the raw amino-acid sequence, 1516 residues long: Alpha-2-macroglobulin homolog (1516 aa).

The first 26 residues, 1–26, serve as a signal peptide directing secretion; sequence MSNLRRFSRSLAVAALVLLPFAAVQA.

The protein belongs to the protease inhibitor I39 (alpha-2-macroglobulin) family. Bacterial alpha-2-macroglobulin subfamily.

This is Alpha-2-macroglobulin homolog from Pseudomonas aeruginosa (strain ATCC 15692 / DSM 22644 / CIP 104116 / JCM 14847 / LMG 12228 / 1C / PRS 101 / PAO1).